The primary structure comprises 441 residues: Mitochondrial inner membrane protein OXA1L (441 aa).

Topologically, residues 1–113 are mitochondrial intermembrane; sequence MALALMCGRR…QAAAEQSFAE (113 aa). The chain crosses the membrane as a helical span at residues 114–134; that stretch reads LGLGSYTPVGLIQNLLEFMHV. The Mitochondrial matrix segment spans residues 135 to 139; it reads NLGLP. The helical transmembrane segment at 140–160 threads the bilayer; sequence WWGAIAACTVLARCLVFPLIV. Over 161–212 the chain is Mitochondrial intermembrane; that stretch reads KGQREAAKIHNHLPEIQKFSARIREAKLTGNHTEFYRASSEMTFYQKKHDIK. The chain crosses the membrane as a helical span at residues 213–233; that stretch reads LFRPLILPLTQAPIFISFFIA. The Mitochondrial matrix segment spans residues 234 to 260; sequence LREMANLPVPSLQTGGLWWFQDLTLSD. A helical transmembrane segment spans residues 261-281; it reads PIYVLPLVVTATMWGVLELGA. The Mitochondrial intermembrane portion of the chain corresponds to 282 to 298; the sequence is ETGMQSSDLQWMRNFIR. Residues 299 to 319 traverse the membrane as a helical segment; sequence LMPLAVLPITIHFPTAVFMYW. The Mitochondrial matrix segment spans residues 320-441; sequence LSSNMFSLGQ…SKQPWRDTLG (122 aa). Residue Ser-364 is modified to Phosphoserine. Thr-400 bears the Phosphothreonine mark. A disordered region spans residues 405–441; the sequence is PLLQHGKNDPPNTPNSSSSSSSSNKAKSKQPWRDTLG. Over residues 418-429 the composition is skewed to low complexity; that stretch reads PNSSSSSSSSNK.

Belongs to the OXA1/ALB3/YidC family. Monomer; predominantly monomeric at low salt concentrations. Homooligomer; predominantly homooligomeric at high salt concentrations. Associates with the mitochondrial ribosome. Associates preferentially as a dimer with the large ribosomal subunit 39S of the mitochondrial ribosome. Interacts with OXA1L; promoting cotranslational quality control in mitochondria.

The protein localises to the mitochondrion inner membrane. Functionally, mitochondrial membrane insertase that mediates the cotranslational insertion of integral membrane proteins into the mitochondrial inner membrane. Essential for the activity and assembly of cytochrome oxidase. Required for the correct biogenesis of ATP synthase and complex I in mitochondria. The chain is Mitochondrial inner membrane protein OXA1L (OXA1L) from Bos taurus (Bovine).